The sequence spans 58 residues: Large ribosomal subunit protein bL32 (58 aa).

Residues 1-20 (MALPKHKKSKSKRDKRRTHQ) show a composition bias toward basic residues. Positions 1 to 26 (MALPKHKKSKSKRDKRRTHQKLTAPN) are disordered.

Belongs to the bacterial ribosomal protein bL32 family.

The protein is Large ribosomal subunit protein bL32 of Desulfatibacillum aliphaticivorans.